A 778-amino-acid polypeptide reads, in one-letter code: MINILKDILYKSYSYLAFPFFYLGWAIKNSYQPNKTIKEEESKPPKYPKEWSDLFIHSYNNEHEKVLEIIQKEPNSINSVDSLNWTPLHVAVSNKSIEVVTLLLERNIEISIKRYTAFHIAACNGDLNIIEKMITMNRVPNGNILSNDMETSLFLSITNNHFEISEKIMDYYQSSMNSNEFKKMIDQFNVHGVSPLIMSVLRKNLKMIKKLIEEGDADINSFKKDNSTSLHCAAIIDFTEAIEYLLDIGGIELMNSINRYGNSPIHEAAIKGNFKSIQTFINQLKKIIIKNNCSDGDSDKDKLNLLLLEIIDKKDKDGSTPLHLCCNCVNSDNIENNLKSCKVLIEEGGVQVNGIDSGNATALHILACVGEDKSLPLVKYFLSIGSDPTIENKYGWTPIHQAYNNKNIQIYQLLLDHLKLTNSTYKLDIEKKRVFQSSSTSTSSSSSSSSSSSSSSSSSSLLLNKEELKLKGIERLKNVINGIKKGEFKNVIVLSGAGISANAGIPPYRTKDGLLAKNKQFSFSMEILEKHPDVFYQAIRDHFYPIIKASNDNDRDDGISAGIKSTKSHYFINDLNEKYGCLLRNYTQNVDPLQERTGTPTDKIIHAHGSFDQWYCTVCQKQYTDKSDRIWREIGRGGLPFCTEPECRHVIRPNVVFFGEPLSQDFRVNTITDFRKADLLIVMGTSLIVYPFASLVNDVASDVPRLLFNFESTGPFVNTMDLERKEKLKQQQENESGESSNDNDNNELIVEARGNRDIVILGDCDKGVDYFNTLFNSF.

9 ANK repeats span residues L83–I112, R114–G142, D148–S178, H191–S221, D225–N255, Y260–I289, D317–G354, G358–I390, and Y394–S423. A disordered region spans residues S438 to S458. A Deacetylase sirtuin-type domain is found at K465–F778. Catalysis depends on H608, which acts as the Proton acceptor. 4 residues coordinate Zn(2+): C616, C619, C642, and C647. Residues K727–N746 are disordered. A compositionally biased stretch (low complexity) spans E733 to N746.

The protein belongs to the sirtuin family. Zn(2+) is required as a cofactor.

It catalyses the reaction N(6)-acetyl-L-lysyl-[protein] + NAD(+) + H2O = 2''-O-acetyl-ADP-D-ribose + nicotinamide + L-lysyl-[protein]. Its function is as follows. NAD-dependent deacetylase, which plays an important role in the regulation of transcriptional repression. The sequence is that of NAD-dependent deacetylase sir2B (sir2B) from Dictyostelium discoideum (Social amoeba).